The following is a 284-amino-acid chain: Phosphatidylglycerol--prolipoprotein diacylglyceryl transferase (284 aa).

Helical transmembrane passes span 14-34 (IAFS…ACAI), 62-82 (YFLW…ILIY), 106-126 (FVGI…IASY), 136-156 (LLIY…FGRI), 190-210 (PSQL…VMWA), 218-238 (GLLI…AEFY), and 252-272 (LSMG…ILLY). Residue R155 coordinates a 1,2-diacyl-sn-glycero-3-phospho-(1'-sn-glycerol).

Belongs to the Lgt family.

It localises to the cell inner membrane. The catalysed reaction is L-cysteinyl-[prolipoprotein] + a 1,2-diacyl-sn-glycero-3-phospho-(1'-sn-glycerol) = an S-1,2-diacyl-sn-glyceryl-L-cysteinyl-[prolipoprotein] + sn-glycerol 1-phosphate + H(+). Its pathway is protein modification; lipoprotein biosynthesis (diacylglyceryl transfer). Functionally, catalyzes the transfer of the diacylglyceryl group from phosphatidylglycerol to the sulfhydryl group of the N-terminal cysteine of a prolipoprotein, the first step in the formation of mature lipoproteins. The polypeptide is Phosphatidylglycerol--prolipoprotein diacylglyceryl transferase (Helicobacter pylori (strain ATCC 700392 / 26695) (Campylobacter pylori)).